The primary structure comprises 405 residues: Histone deacetylase clr6 (405 aa).

The histone deacetylase stretch occupies residues 6–318 (KKVSYFYDED…WTYETGLLAG (313 aa)). The active site involves His138.

The protein belongs to the histone deacetylase family. HD type 1 subfamily. As to quaternary structure, heterotetramer of alp13, clr6, prw1 and pst2.

It localises to the nucleus. It catalyses the reaction N(6)-acetyl-L-lysyl-[histone] + H2O = L-lysyl-[histone] + acetate. Its function is as follows. Responsible for the deacetylation of lysine residues on the N-terminal part of the core histones (H2A, H2B, H3 and H4). Histone deacetylation gives a tag for epigenetic repression and plays an important role in transcriptional regulation, cell cycle progression and developmental events. Histone deacetylases act via the formation of large multiprotein complexes. Has a role in chromatin assembly and chromosome segregation. The sequence is that of Histone deacetylase clr6 (clr6) from Schizosaccharomyces pombe (strain 972 / ATCC 24843) (Fission yeast).